The sequence spans 361 residues: Septin-2 (361 aa).

Tyrosine 17 carries the phosphotyrosine modification. Residues 34–306 (KGFEFTLMVV…ENFRSERLKR (273 aa)) form the Septin-type G domain. A G1 motif region spans residues 44-51 (GESGLGKS). Residues 44 to 52 (GESGLGKST), threonine 78, glycine 104, and 183 to 186 (KADT) each bind GTP. The segment at 101-104 (DTPG) is G3 motif. The interval 182–185 (AKAD) is G4 motif. N6-acetyllysine is present on lysine 190. Tyrosine 211 carries the phosphotyrosine modification. A Phosphoserine modification is found at serine 218. Residues glycine 241, arginine 256, and tyrosine 258 each coordinate GTP. Positions 260–270 (WGVVEVENPEH) are important for dimerization.

Belongs to the TRAFAC class TrmE-Era-EngA-EngB-Septin-like GTPase superfamily. Septin GTPase family. As to quaternary structure, septins polymerize into heterooligomeric protein complexes that form filaments, and associate with cellular membranes, actin filaments and microtubules. GTPase activity is required for filament formation. Septin filaments are assembled from asymmetrical heterotrimers, composed of SEPTIN2, SEPTIN6 and SEPTIN7 that associate head-to-head to form a hexameric unit. Interaction between SEPTIN2 and SEPTIN7 seems indirect. Also interacts with SEPTIN9 and SEPTIN5. Interaction with SEPTIN4 not detected. Component of a septin core octameric complex consisting of SEPTIN12, SEPTIN7, SEPTIN6 and SEPTIN2 or SEPTIN4 in the order 12-7-6-2-2-6-7-12 or 12-7-6-4-4-6-7-12 and located in the sperm annulus. Interacts with MAP4. Interacts with DZIP1L. In terms of tissue distribution, widely expressed.

The protein resides in the cytoplasm. Its subcellular location is the cytoskeleton. It localises to the spindle. It is found in the chromosome. The protein localises to the centromere. The protein resides in the kinetochore. Its subcellular location is the cleavage furrow. It localises to the midbody. It is found in the cell cortex. The protein localises to the cell projection. The protein resides in the cilium membrane. Its subcellular location is the cilium. It localises to the flagellum. Its function is as follows. Filament-forming cytoskeletal GTPase. Forms a filamentous structure with SEPTIN12, SEPTIN6, SEPTIN2 and probably SEPTIN4 at the sperm annulus which is required for the structural integrity and motility of the sperm tail during postmeiotic differentiation. Required for normal organization of the actin cytoskeleton. Plays a role in the biogenesis of polarized columnar-shaped epithelium by maintaining polyglutamylated microtubules, thus facilitating efficient vesicle transport, and by impeding MAP4 binding to tubulin. Required for the progression through mitosis. Forms a scaffold at the midplane of the mitotic splindle required to maintain CENPE localization at kinetochores and consequently chromosome congression. During anaphase, may be required for chromosome segregation and spindle elongation. Plays a role in ciliogenesis and collective cell movements. In cilia, required for the integrity of the diffusion barrier at the base of the primary cilium that prevents diffusion of transmembrane proteins between the cilia and plasma membranes: probably acts by regulating the assembly of the tectonic-like complex (also named B9 complex) by localizing TMEM231 protein. This is Septin-2 from Mus musculus (Mouse).